The sequence spans 192 residues: Signal peptidase complex catalytic subunit sec11 (192 aa).

Residues 1-18 (MLSFLSSNLSNTRQSIAQ) are Cytoplasmic-facing. The helical; Signal-anchor for type II membrane protein transmembrane segment at 19 to 39 (VLNFALVLSTAFMLWKGLSVV) threads the bilayer. The Lumenal portion of the chain corresponds to 40–192 (TASSSPIVVV…MGLMVILQRE (153 aa)). Active-site charge relay system residues include serine 53, histidine 92, and aspartate 134. A C-terminal short (CTS) helix region spans residues 178 to 189 (VLLGIMGLMVIL).

The protein belongs to the peptidase S26B family. As to quaternary structure, component of the signal peptidase complex (SPC) composed of a catalytic subunit SEC11 and three accessory subunits SPC1, SPC2 and SPC3. The complex induces a local thinning of the ER membrane which is used to measure the length of the signal peptide (SP) h-region of protein substrates. This ensures the selectivity of the complex towards h-regions shorter than 18-20 amino acids. SPC associates with the translocon complex.

Its subcellular location is the endoplasmic reticulum membrane. The enzyme catalyses Cleavage of hydrophobic, N-terminal signal or leader sequences from secreted and periplasmic proteins.. In terms of biological role, catalytic component of the signal peptidase complex (SPC) which catalyzes the cleavage of N-terminal signal sequences from nascent proteins as they are translocated into the lumen of the endoplasmic reticulum. Specifically cleaves N-terminal signal peptides that contain a hydrophobic alpha-helix (h-region) shorter than 18-20 amino acids. The polypeptide is Signal peptidase complex catalytic subunit sec11 (sec11) (Emericella nidulans (strain FGSC A4 / ATCC 38163 / CBS 112.46 / NRRL 194 / M139) (Aspergillus nidulans)).